The sequence spans 274 residues: Large ribosomal subunit protein uL2cz/uL2cy (274 aa).

Disordered stretches follow at residues 1-22 (MAIH…DSQV) and 223-274 (MNPV…RRTK).

It belongs to the universal ribosomal protein uL2 family. As to quaternary structure, part of the 50S ribosomal subunit.

It is found in the plastid. The protein localises to the chloroplast. In Phaseolus vulgaris (Kidney bean), this protein is Large ribosomal subunit protein uL2cz/uL2cy (rpl2-A).